Reading from the N-terminus, the 149-residue chain is Sec-independent protein translocase protein TatB (149 aa).

Residues 1-21 (MFDIGFTELIVIGIVALVVVG) traverse the membrane as a helical segment. Positions 92 to 149 (VDMLDKSVRNEPQNAQTPPQTADAEPAQPDVRQQTLPLEEPDQNRAAGEPSSTSTRPA) are disordered. The segment covering 101-111 (NEPQNAQTPPQ) has biased composition (polar residues).

It belongs to the TatB family. As to quaternary structure, the Tat system comprises two distinct complexes: a TatABC complex, containing multiple copies of TatA, TatB and TatC subunits, and a separate TatA complex, containing only TatA subunits. Substrates initially bind to the TatABC complex, which probably triggers association of the separate TatA complex to form the active translocon.

It is found in the cell inner membrane. Part of the twin-arginine translocation (Tat) system that transports large folded proteins containing a characteristic twin-arginine motif in their signal peptide across membranes. Together with TatC, TatB is part of a receptor directly interacting with Tat signal peptides. TatB may form an oligomeric binding site that transiently accommodates folded Tat precursor proteins before their translocation. The polypeptide is Sec-independent protein translocase protein TatB (Thiobacillus denitrificans (strain ATCC 25259 / T1)).